The chain runs to 141 residues: uncharacterized protein (141 aa).

Transmembrane regions (helical) follow at residues 7–27 (FWAL…KVGV), 34–54 (FATL…VAAT), 69–89 (LFLA…FRAL), 97–117 (VAPL…LFLG), and 121–141 (NLMN…LAVF). Residues 14–140 (AFAALTAVFA…IAAGALLLAV (127 aa)) form the EamA domain.

This sequence belongs to the EamA transporter family.

Its subcellular location is the cell membrane. This is an uncharacterized protein from Sinorhizobium sp.